Consider the following 222-residue polypeptide: MNRSLYRTRIKFCGMTRAGDIRLAGELGVDAVGFIFAHGSPRRVAPAEARAMRQATAPMVDVVALFRNNSKEEVREVVRTVRPTLLQFHGEEDDAFCRSFNLPYLKAVPMGASGVNGEDANARTLQLAYPNTAGFLFDSHAPGEGGGTGKTFDWSRLPTGLHRPFLLAGGITADNVFDAIVATLPWGVDVSSGVELAPGIKDGHKMRKFVEEVRRADCHEMS.

This sequence belongs to the TrpF family.

The enzyme catalyses N-(5-phospho-beta-D-ribosyl)anthranilate = 1-(2-carboxyphenylamino)-1-deoxy-D-ribulose 5-phosphate. Its pathway is amino-acid biosynthesis; L-tryptophan biosynthesis; L-tryptophan from chorismate: step 3/5. The protein is N-(5'-phosphoribosyl)anthranilate isomerase of Xanthomonas campestris pv. campestris (strain 8004).